A 132-amino-acid chain; its full sequence is RuBisCO chaperone RbcX (132 aa).

Positions 110–132 (HLSLSNPSPESEQQTISDTDWDH) are disordered. Positions 111 to 132 (LSLSNPSPESEQQTISDTDWDH) are enriched in polar residues.

The protein belongs to the RbcX family. Homodimer. Interacts with the exposed C-terminal peptide of RbcL via its central cleft, contacts a second RbcL monomer via its peripheral polar surface. RbcX and Raf1 can bind simultaneously to RbcL.

It localises to the carboxysome. The protein resides in the cytoplasm. Its function is as follows. An RbcL-specific chaperone. The central cleft of the RbcX homodimer (RbcX2) binds the C-terminus of an RbcL monomer, stabilizing the C-terminus and probably preventing its reassociation with chaperonin GroEL-ES. At the same time the peripheral region of RbcX2 binds a second RbcL monomer, bridging the RbcL homodimers in the correct orientation. The RbcX2(2)-bound RbcL dimers then assemble into the RbcL8 core (RbcL8-(RbcX2)8). RbcS binding triggers the release of RbcX2. Functionally, when rbcL-rbcX-rbcS or rbcL-rbcS were overexpressed in E.coli no change in reconstituted RuBisCO activity was observed, which suggests RbcX plays no role in RuBisCO assembly in this system. However in PubMed:8472962 E.coli chaperones groL and groS were also overexpressed, which may compensate for lack of rbcX. In Nostoc sp. (strain PCC 7120 / SAG 25.82 / UTEX 2576), this protein is RuBisCO chaperone RbcX.